The sequence spans 525 residues: Chromosomal replication initiator protein DnaA (525 aa).

The interval M1–T71 is domain I, interacts with DnaA modulators. The interval T71 to S188 is domain II. The disordered stretch occupies residues A162–D182. Residues P169–A181 are compositionally biased toward low complexity. The interval K189–S405 is domain III, AAA+ region. The ATP site is built by G233, G235, K236, and T237. The interval K406–G525 is domain IV, binds dsDNA.

This sequence belongs to the DnaA family. As to quaternary structure, oligomerizes as a right-handed, spiral filament on DNA at oriC.

The protein resides in the cytoplasm. Functionally, plays an essential role in the initiation and regulation of chromosomal replication. ATP-DnaA binds to the origin of replication (oriC) to initiate formation of the DNA replication initiation complex once per cell cycle. Binds the DnaA box (a 9 base pair repeat at the origin) and separates the double-stranded (ds)DNA. Forms a right-handed helical filament on oriC DNA; dsDNA binds to the exterior of the filament while single-stranded (ss)DNA is stabiized in the filament's interior. The ATP-DnaA-oriC complex binds and stabilizes one strand of the AT-rich DNA unwinding element (DUE), permitting loading of DNA polymerase. After initiation quickly degrades to an ADP-DnaA complex that is not apt for DNA replication. Binds acidic phospholipids. This chain is Chromosomal replication initiator protein DnaA, found in Burkholderia cenocepacia (strain HI2424).